The following is a 251-amino-acid chain: Putative integrase/recombinase y4eF (251 aa).

A Core-binding (CB) domain is found at M1–L40. Positions K58 to S231 constitute a Tyr recombinase domain. Active-site residues include R93, K118, H183, R186, and H209. Y218 (O-(3'-phospho-DNA)-tyrosine intermediate) is an active-site residue.

Belongs to the 'phage' integrase family.

This is Putative integrase/recombinase y4eF from Sinorhizobium fredii (strain NBRC 101917 / NGR234).